Consider the following 310-residue polypeptide: Mas-related G-protein coupled receptor member E (310 aa).

Over 1-22 the chain is Extracellular; it reads MTSLSVHTDSPSTQGEMAFNLT. Asparagine 20 carries N-linked (GlcNAc...) asparagine glycosylation. The chain crosses the membrane as a helical span at residues 23-43; sequence ILSLTELLSLGGLLGNGVALW. Residues 44-60 are Cytoplasmic-facing; it reads LLNQNVYRNPFSIYLLD. The helical transmembrane segment at 61–81 threads the bilayer; that stretch reads VACADLIFLCCHMVAIIPELL. The Extracellular portion of the chain corresponds to 82–92; sequence QDQLNFPEFVH. Residues 93–113 form a helical membrane-spanning segment; sequence ISLTMLRFFCYIVGLSLLAAI. Topologically, residues 114–133 are cytoplasmic; the sequence is STEQCLATLFPAWYLCRRPR. The chain crosses the membrane as a helical span at residues 134-154; sequence YLTTCVCALIWVLCLLLDLLL. Residues 155-174 lie on the Extracellular side of the membrane; that stretch reads SGACTQFFGAPSYHLCDMLW. The helical transmembrane segment at 175 to 195 threads the bilayer; it reads LVVAVLLAALCCTMCVTSLLL. Residues 196 to 213 are Cytoplasmic-facing; it reads LLRVERGPERHQPRGFPT. The helical transmembrane segment at 214 to 234 threads the bilayer; it reads LVLLAVLLFLFCGLPFGIFWL. The Extracellular segment spans residues 235–248; sequence SKNLSWHIPLYFYH. N-linked (GlcNAc...) asparagine glycosylation occurs at asparagine 237. A helical membrane pass occupies residues 249–269; sequence FSFFMASVHSAAKPAIYFFLG. Residues 270–310 lie on the Cytoplasmic side of the membrane; sequence STPGQRFREPLRLVLQRALGDEAELGAGREASQGGLVDMTV.

The protein belongs to the G-protein coupled receptor 1 family. Mas subfamily.

The protein localises to the cell membrane. Its function is as follows. Orphan receptor. May regulate nociceptor function and/or development, including the sensation or modulation of pain. The protein is Mas-related G-protein coupled receptor member E (Mrgpre) of Mus musculus (Mouse).